The primary structure comprises 230 residues: N-(5'-phosphoribosyl)anthranilate isomerase (230 aa).

This sequence belongs to the TrpF family.

It carries out the reaction N-(5-phospho-beta-D-ribosyl)anthranilate = 1-(2-carboxyphenylamino)-1-deoxy-D-ribulose 5-phosphate. It functions in the pathway amino-acid biosynthesis; L-tryptophan biosynthesis; L-tryptophan from chorismate: step 3/5. This chain is N-(5'-phosphoribosyl)anthranilate isomerase, found in Trichodesmium erythraeum (strain IMS101).